The following is a 414-amino-acid chain: Gamma-glutamyl phosphate reductase (414 aa).

This sequence belongs to the gamma-glutamyl phosphate reductase family.

It localises to the cytoplasm. The catalysed reaction is L-glutamate 5-semialdehyde + phosphate + NADP(+) = L-glutamyl 5-phosphate + NADPH + H(+). The protein operates within amino-acid biosynthesis; L-proline biosynthesis; L-glutamate 5-semialdehyde from L-glutamate: step 2/2. Catalyzes the NADPH-dependent reduction of L-glutamate 5-phosphate into L-glutamate 5-semialdehyde and phosphate. The product spontaneously undergoes cyclization to form 1-pyrroline-5-carboxylate. This Kosmotoga olearia (strain ATCC BAA-1733 / DSM 21960 / TBF 19.5.1) protein is Gamma-glutamyl phosphate reductase.